The following is a 223-amino-acid chain: Shematrin-like protein 2 (223 aa).

A signal peptide spans 1–19 (MRILANLILLGVLFGVCLC).

Prismatic layer of shell (at protein level).

The protein resides in the secreted. The sequence is that of Shematrin-like protein 2 from Margaritifera margaritifera (Freshwater pearl mussel).